We begin with the raw amino-acid sequence, 576 residues long: Urease subunit alpha (576 aa).

In terms of domain architecture, Urease spans 132-576 (GGVDTHIHFI…LPMAQRYFLF (445 aa)). His-137, His-139, and Lys-220 together coordinate Ni(2+). Lys-220 is subject to N6-carboxylysine. His-222 contacts substrate. 2 residues coordinate Ni(2+): His-249 and His-275. His-323 functions as the Proton donor in the catalytic mechanism. Residue Asp-363 coordinates Ni(2+).

It belongs to the metallo-dependent hydrolases superfamily. Urease alpha subunit family. In terms of assembly, heterotrimer of UreA (gamma), UreB (beta) and UreC (alpha) subunits. Three heterotrimers associate to form the active enzyme. Ni cation is required as a cofactor. Carboxylation allows a single lysine to coordinate two nickel ions.

It is found in the cytoplasm. It carries out the reaction urea + 2 H2O + H(+) = hydrogencarbonate + 2 NH4(+). Its pathway is nitrogen metabolism; urea degradation; CO(2) and NH(3) from urea (urease route): step 1/1. This is Urease subunit alpha from Arthrobacter sp. (strain FB24).